Here is a 379-residue protein sequence, read N- to C-terminus: Cytochrome b (379 aa).

Transmembrane regions (helical) follow at residues Phe33–Met53, Trp77–Val98, Trp113–Leu133, and Phe178–Leu198. His83 and His97 together coordinate heme b. The heme b site is built by His182 and His196. A ubiquinone is bound at residue His201. The next 4 membrane-spanning stretches (helical) occupy residues Ile226–Phe246, Leu288–Asn308, Ile320–Gly340, and Phe347–Pro367.

The protein belongs to the cytochrome b family. In terms of assembly, the cytochrome bc1 complex contains 11 subunits: 3 respiratory subunits (MT-CYB, CYC1 and UQCRFS1), 2 core proteins (UQCRC1 and UQCRC2) and 6 low-molecular weight proteins (UQCRH/QCR6, UQCRB/QCR7, UQCRQ/QCR8, UQCR10/QCR9, UQCR11/QCR10 and a cleavage product of UQCRFS1). This cytochrome bc1 complex then forms a dimer. Heme b serves as cofactor.

It localises to the mitochondrion inner membrane. Functionally, component of the ubiquinol-cytochrome c reductase complex (complex III or cytochrome b-c1 complex) that is part of the mitochondrial respiratory chain. The b-c1 complex mediates electron transfer from ubiquinol to cytochrome c. Contributes to the generation of a proton gradient across the mitochondrial membrane that is then used for ATP synthesis. This chain is Cytochrome b (MT-CYB), found in Necromys amoenus (Pleasant bolo mouse).